The following is a 200-amino-acid chain: Transcription elongation factor A protein-like 5 (200 aa).

Basic and acidic residues-rich tracts occupy residues 1–49, 61–85, 94–106, 114–153, and 190–200; these read MEKF…KLEV, GEGK…KPDS, RAAE…DYVP, DRGT…EELR, and GQKDLEDAPFV. The interval 1–200 is disordered; sequence MEKFYKENEG…QKDLEDAPFV (200 aa).

Belongs to the TFS-II family. TFA subfamily.

It is found in the nucleus. Functionally, may be involved in transcriptional regulation. The protein is Transcription elongation factor A protein-like 5 (Tceal5) of Mus musculus (Mouse).